A 414-amino-acid chain; its full sequence is Transforming growth factor beta-2 proprotein (414 aa).

Positions 1 to 19 are cleaved as a signal peptide; the sequence is MHYCVLSAFLILHLVTVAL. N-linked (GlcNAc...) asparagine glycosylation is found at Asn72, Asn140, and Asn241. 4 disulfide bridges follow: Cys309/Cys318, Cys317/Cys380, Cys346/Cys411, and Cys350/Cys413.

It belongs to the TGF-beta family. Interacts with the serine proteases, HTRA1 and HTRA3. Interacts with ASPN. Interacts with MFAP5. In terms of assembly, interacts with Transforming growth factor beta-2 (TGF-beta-2) chain; interaction is non-covalent and maintains (TGF-beta-2) in a latent state. Interacts with LRRC32/GARP; leading to regulate activation of TGF-beta-2. Interacts with NREP; the interaction results in a decrease in TGFB2 autoinduction. As to quaternary structure, transforming growth factor beta-2: Homodimer; disulfide-linked. Transforming growth factor beta-2: Interacts with TGF-beta receptors (TGFBR1 and TGFBR2), leading to signal transduction. Post-translationally, the precursor proprotein is cleaved in the Golgi apparatus to form Transforming growth factor beta-2 (TGF-beta-2) and Latency-associated peptide (LAP) chains, which remain non-covalently linked, rendering TGF-beta-2 inactive.

It localises to the secreted. The protein localises to the extracellular space. It is found in the extracellular matrix. Precursor of the Latency-associated peptide (LAP) and Transforming growth factor beta-2 (TGF-beta-2) chains, which constitute the regulatory and active subunit of TGF-beta-2, respectively. Functionally, required to maintain the Transforming growth factor beta-2 (TGF-beta-2) chain in a latent state during storage in extracellular matrix. Associates non-covalently with TGF-beta-2 and regulates its activation via interaction with 'milieu molecules', such as LTBP1 and LRRC32/GARP, that control activation of TGF-beta-2. In terms of biological role, multifunctional protein that regulates various processes such as angiogenesis and heart development. Activation into mature form follows different steps: following cleavage of the proprotein in the Golgi apparatus, Latency-associated peptide (LAP) and Transforming growth factor beta-2 (TGF-beta-2) chains remain non-covalently linked rendering TGF-beta-2 inactive during storage in extracellular matrix. At the same time, LAP chain interacts with 'milieu molecules', such as LTBP1 and LRRC32/GARP, that control activation of TGF-beta-2 and maintain it in a latent state during storage in extracellular milieus. Once activated following release of LAP, TGF-beta-2 acts by binding to TGF-beta receptors (TGFBR1 and TGFBR2), which transduce signal. In Chlorocebus aethiops (Green monkey), this protein is Transforming growth factor beta-2 proprotein (TGFB2).